The sequence spans 166 residues: NADH-ubiquinone oxidoreductase chain 6 (166 aa).

A run of 6 helical transmembrane segments spans residues 4-24 (FFSL…VVSA), 27-47 (QGVV…VFLG), 50-70 (FAAL…FGYC), 82-102 (VGGT…LLCL), 109-129 (LLVY…VGVF), and 135-155 (WGLI…LVIL).

It belongs to the complex I subunit 6 family.

It is found in the mitochondrion membrane. It catalyses the reaction a ubiquinone + NADH + 5 H(+)(in) = a ubiquinol + NAD(+) + 4 H(+)(out). Core subunit of the mitochondrial membrane respiratory chain NADH dehydrogenase (Complex I) that is believed to belong to the minimal assembly required for catalysis. Complex I functions in the transfer of electrons from NADH to the respiratory chain. The immediate electron acceptor for the enzyme is believed to be ubiquinone. This Lycodon semicarinatus (Ryukyu odd-tooth snake) protein is NADH-ubiquinone oxidoreductase chain 6 (MT-ND6).